The primary structure comprises 754 residues: 5-methyltetrahydropteroyltriglutamate--homocysteine methyltransferase (754 aa).

5-methyltetrahydropteroyltri-L-glutamate-binding positions include 15 to 18 (RELK) and Lys-114. L-homocysteine is bound by residues 430-432 (IGS) and Glu-483. L-methionine-binding positions include 430–432 (IGS) and Glu-483. 5-methyltetrahydropteroyltri-L-glutamate-binding positions include 514-515 (RC) and Trp-560. Asp-598 is a binding site for L-homocysteine. Position 598 (Asp-598) interacts with L-methionine. Glu-604 is a binding site for 5-methyltetrahydropteroyltri-L-glutamate. His-641, Cys-643, and Glu-665 together coordinate Zn(2+). The Proton donor role is filled by His-694. Cys-726 provides a ligand contact to Zn(2+).

The protein belongs to the vitamin-B12 independent methionine synthase family. Zn(2+) serves as cofactor.

The enzyme catalyses 5-methyltetrahydropteroyltri-L-glutamate + L-homocysteine = tetrahydropteroyltri-L-glutamate + L-methionine. It functions in the pathway amino-acid biosynthesis; L-methionine biosynthesis via de novo pathway; L-methionine from L-homocysteine (MetE route): step 1/1. In terms of biological role, catalyzes the transfer of a methyl group from 5-methyltetrahydrofolate to homocysteine resulting in methionine formation. The sequence is that of 5-methyltetrahydropteroyltriglutamate--homocysteine methyltransferase from Campylobacter jejuni subsp. jejuni serotype O:6 (strain 81116 / NCTC 11828).